A 150-amino-acid polypeptide reads, in one-letter code: Submaxillary gland androgen-regulated protein 2, isoform alpha (150 aa).

The signal sequence occupies residues 1-22; it reads MKALYMVFVLWVLIGCFLSGEC.

The protein resides in the secreted. May play a role in protection or detoxification. In Mus musculus (Mouse), this protein is Submaxillary gland androgen-regulated protein 2, isoform alpha (Smr2).